Consider the following 373-residue polypeptide: STE20-related kinase adapter protein alpha (373 aa).

The Protein kinase domain occupies 11–321 (YELLTVIGKG…ASTLLNHSFF (311 aa)). Positions 255 to 281 (STSRSAANSGLSESLAPSTPRTSNGDS) are enriched in polar residues. Positions 255–288 (STSRSAANSGLSESLAPSTPRTSNGDSPSHPYHR) are disordered. The residue at position 361 (Thr-361) is a Phosphothreonine; by LKB1.

Belongs to the protein kinase superfamily. STE Ser/Thr protein kinase family. STE20 subfamily. In terms of assembly, component of a trimeric complex composed of STK11/LKB1, STRAD (STRADA or STRADB) and CAB39/MO25 (CAB39/MO25alpha or CAB39L/MO25beta): the complex tethers STK11/LKB1 in the cytoplasm and stimulates its catalytic activity.

Its subcellular location is the nucleus. It localises to the cytoplasm. Functionally, pseudokinase which, in complex with CAB39/MO25 (CAB39/MO25alpha or CAB39L/MO25beta), binds to and activates STK11/LKB1. Adopts a closed conformation typical of active protein kinases and binds STK11/LKB1 as a pseudosubstrate, promoting conformational change of STK11/LKB1 in an active conformation. In Bos taurus (Bovine), this protein is STE20-related kinase adapter protein alpha (STRADA).